The chain runs to 234 residues: 2-C-methyl-D-erythritol 4-phosphate cytidylyltransferase (234 aa).

This sequence belongs to the IspD/TarI cytidylyltransferase family. IspD subfamily.

The enzyme catalyses 2-C-methyl-D-erythritol 4-phosphate + CTP + H(+) = 4-CDP-2-C-methyl-D-erythritol + diphosphate. It participates in isoprenoid biosynthesis; isopentenyl diphosphate biosynthesis via DXP pathway; isopentenyl diphosphate from 1-deoxy-D-xylulose 5-phosphate: step 2/6. Its function is as follows. Catalyzes the formation of 4-diphosphocytidyl-2-C-methyl-D-erythritol from CTP and 2-C-methyl-D-erythritol 4-phosphate (MEP). The protein is 2-C-methyl-D-erythritol 4-phosphate cytidylyltransferase of Pseudomonas paraeruginosa (strain DSM 24068 / PA7) (Pseudomonas aeruginosa (strain PA7)).